Here is a 629-residue protein sequence, read N- to C-terminus: tRNA uridine 5-carboxymethylaminomethyl modification enzyme MnmG (629 aa).

13 to 18 is a binding site for FAD; it reads GGGHAG. 273 to 287 serves as a coordination point for NAD(+); the sequence is GPRYCPSIEDKVVRF.

This sequence belongs to the MnmG family. In terms of assembly, homodimer. Heterotetramer of two MnmE and two MnmG subunits. FAD serves as cofactor.

It localises to the cytoplasm. Functionally, NAD-binding protein involved in the addition of a carboxymethylaminomethyl (cmnm) group at the wobble position (U34) of certain tRNAs, forming tRNA-cmnm(5)s(2)U34. The polypeptide is tRNA uridine 5-carboxymethylaminomethyl modification enzyme MnmG (Nitrosococcus oceani (strain ATCC 19707 / BCRC 17464 / JCM 30415 / NCIMB 11848 / C-107)).